The following is a 522-amino-acid chain: MTRFAVLPLSVLLLVLLFLCTESLAKSEESEEYDVAVPSCCGFSSPLLIKKDQWKPIFETKFGQISTVQIGNGCGGMGPYKIHSITLEPNTILLPLLLHSDMVFFVDSGSGILNWVDEEAKSTEIRLGDVYRLRPGSVFYLQSKPVDIFLGTKLKLYAIFSNNDECLHDPCFGAYSSITDLMFGFDETILQSAFGVPEGIIELMRNRTKPPLIVSETLCTPGVANTWQLQPRLLKLFAGSADLVDNKKKKEKKEKKEKVKKAKTFNVFESEPDFESPYGRTITINRKDLKVLKGSMVGVSMVNLTQGSMMGPHWNPWACEISIVLKGAGMVRVLRSSISSNTSSECKNVRFKVEEGDIFAVPRLHPMAQMSFNNDSLVFVGFTTSAKNNEPQFLAGEDSALRMLDRQVLAASLNVSSVTIDGLLGAQKEAVILECHSCAEGEIEKLKVEIERKKIDDERKRRHDERKKEEEEAKREEEERRKREEEEEKKRWPPQQPPQEEELRERQLPMEKEWEMEGEEES.

The first 25 residues, 1 to 25 (MTRFAVLPLSVLLLVLLFLCTESLA), serve as a signal peptide directing secretion. Residues asparagine 206, asparagine 303, asparagine 341, asparagine 374, and asparagine 414 are each glycosylated (N-linked (GlcNAc...) asparagine). A Cupin type-1 domain is found at 265–421 (FNVFESEPDF…SLNVSSVTID (157 aa)). Positions 457–522 (DERKRRHDER…EWEMEGEEES (66 aa)) are disordered. Composition is skewed to basic and acidic residues over residues 466 to 491 (RKKEEEEAKREEEERRKREEEEEKKR) and 501 to 515 (EELRERQLPMEKEWE).

The protein belongs to the 7S seed storage protein family.

Its function is as follows. Seed storage protein. This chain is Vicilin-like seed storage protein At4g36700, found in Arabidopsis thaliana (Mouse-ear cress).